Consider the following 63-residue polypeptide: Large ribosomal subunit protein bL28 (63 aa).

This sequence belongs to the bacterial ribosomal protein bL28 family.

The protein is Large ribosomal subunit protein bL28 of Thermomicrobium roseum (strain ATCC 27502 / DSM 5159 / P-2).